The sequence spans 673 residues: Methionine--tRNA ligase (673 aa).

Residues 13–23 carry the 'HIGH' region motif; the sequence is PYTNGFCHLGH. 4 residues coordinate Zn(2+): Cys-144, Cys-147, Cys-156, and Cys-160. The short motif at 325-329 is the 'KMSKS' region element; the sequence is KFSKS. Lys-328 provides a ligand contact to ATP. The region spanning 575–673 is the tRNA-binding domain; that stretch reads DVAKLDLRVG…KDVPEGTKVH (99 aa).

The protein belongs to the class-I aminoacyl-tRNA synthetase family. MetG type 1 subfamily. As to quaternary structure, homodimer. Zn(2+) serves as cofactor.

The protein localises to the cytoplasm. It carries out the reaction tRNA(Met) + L-methionine + ATP = L-methionyl-tRNA(Met) + AMP + diphosphate. In terms of biological role, is required not only for elongation of protein synthesis but also for the initiation of all mRNA translation through initiator tRNA(fMet) aminoacylation. In Methanocorpusculum labreanum (strain ATCC 43576 / DSM 4855 / Z), this protein is Methionine--tRNA ligase.